The sequence spans 393 residues: Venom metalloproteinase BumaMPs1 (393 aa).

The N-terminal stretch at M1–A15 is a signal peptide. The N-linked (GlcNAc...) asparagine glycan is linked to N158. The 211-residue stretch at K167 to K377 folds into the Peptidase M12B domain. H323 provides a ligand contact to Zn(2+). The active site involves E324. Zn(2+) is bound by residues H327 and H333. The tract at residues I378 to N393 is disintegrin-like domain.

This sequence belongs to the venom metalloproteinase (M12B) family. Zn(2+) serves as cofactor. In terms of processing, contains several disulfide bonds. In terms of tissue distribution, expressed by the venom gland.

Its subcellular location is the secreted. In terms of biological role, metalloprotease. This is Venom metalloproteinase BumaMPs1 from Olivierus martensii (Manchurian scorpion).